Reading from the N-terminus, the 141-residue chain is Sperm protein associated with the nucleus on the X chromosome N3 (141 aa).

Polar residues predominate over residues 1–10 (MEQPTSSTNG). Disordered regions lie at residues 1–47 (MEQP…TKTS) and 66–141 (NQLE…SGED). Positions 11 to 26 (EKTKSPCESNNKKNDE) are enriched in basic and acidic residues. Positions 66-80 (NQLENEQSQENSINP) are enriched in polar residues. Acidic residues predominate over residues 84 to 103 (EEDEGVDLSEGSSNEDEDLG). Over residues 132–141 (EGSSQDSGED) the composition is skewed to polar residues.

It belongs to the SPAN-X family.

In Homo sapiens (Human), this protein is Sperm protein associated with the nucleus on the X chromosome N3 (SPANXN3).